The primary structure comprises 119 residues: Ribonuclease P protein component (119 aa).

This sequence belongs to the RnpA family. Consists of a catalytic RNA component (M1 or rnpB) and a protein subunit.

The enzyme catalyses Endonucleolytic cleavage of RNA, removing 5'-extranucleotides from tRNA precursor.. RNaseP catalyzes the removal of the 5'-leader sequence from pre-tRNA to produce the mature 5'-terminus. It can also cleave other RNA substrates such as 4.5S RNA. The protein component plays an auxiliary but essential role in vivo by binding to the 5'-leader sequence and broadening the substrate specificity of the ribozyme. The sequence is that of Ribonuclease P protein component from Coprothermobacter proteolyticus (strain ATCC 35245 / DSM 5265 / OCM 4 / BT).